A 938-amino-acid chain; its full sequence is AP-4 complex subunit epsilon (938 aa).

HEAT repeat units lie at residues 118–153 (DLII…INEE), 154–190 (TIPA…KSPS), 192–227 (VSHL…EDVN), 234–272 (SSFV…IMAL), 321–358 (KLLE…ISPD), 359–395 (IAEQ…SSNV), 397–431 (VIVD…QFAP), 454–495 (KVAH…EPKL), 517–556 (YSAS…FEIA), and 562–601 (DVLP…RAVE). Disordered stretches follow at residues 690–712 (EPSY…RESS), 725–867 (WGRP…VMGL), 880–912 (VDSL…KEAL), and 919–938 (RQMG…DLLG). A compositionally biased stretch (polar residues) spans 694–706 (YSESHQPISTSLV). Residues 728-744 (PSYQSTTAASSTTPQAA) are compositionally biased toward low complexity. A compositionally biased stretch (basic and acidic residues) spans 764-779 (SSYEPKKPEIDPEKQR). Over residues 808–821 (ANKTATVPKENQTP) the composition is skewed to polar residues. Composition is skewed to low complexity over residues 853 to 863 (DSSSQDGGSSD) and 880 to 891 (VDSLLSELSDSS). One copy of the HEAT 11 repeat lies at 874-911 (VTTTTSVDSLLSELSDSSKGNSRTYQPQTSKGPNTKEA). Polar residues predominate over residues 892 to 906 (KGNSRTYQPQTSKGP).

This sequence belongs to the adaptor complexes large subunit family. In terms of assembly, adaptor protein complex 4 (AP-4) is a heterotetramer composed of two large adaptins (epsilon-type subunit and beta-type subunit), a medium adaptin (mu-type subunit) and a small adaptin (sigma-type subunit).

It is found in the golgi apparatus. Its subcellular location is the trans-Golgi network. The protein localises to the membrane. It localises to the coated pit. Its function is as follows. Subunit of novel type of clathrin- or non-clathrin-associated protein coat involved in targeting proteins from the trans-Golgi network (TGN) to the endosomal-lysosomal system. The chain is AP-4 complex subunit epsilon from Arabidopsis thaliana (Mouse-ear cress).